We begin with the raw amino-acid sequence, 403 residues long: Acetylornithine aminotransferase (403 aa).

Residues 107–108 and Phe-140 contribute to the pyridoxal 5'-phosphate site; that span reads GA. Arg-143 contributes to the N(2)-acetyl-L-ornithine binding site. Residue 225–228 participates in pyridoxal 5'-phosphate binding; the sequence is DEVQ. At Lys-254 the chain carries N6-(pyridoxal phosphate)lysine. Ser-282 lines the N(2)-acetyl-L-ornithine pocket. Thr-283 provides a ligand contact to pyridoxal 5'-phosphate.

It belongs to the class-III pyridoxal-phosphate-dependent aminotransferase family. ArgD subfamily. In terms of assembly, homodimer. It depends on pyridoxal 5'-phosphate as a cofactor.

The protein resides in the cytoplasm. The enzyme catalyses N(2)-acetyl-L-ornithine + 2-oxoglutarate = N-acetyl-L-glutamate 5-semialdehyde + L-glutamate. Its pathway is amino-acid biosynthesis; L-arginine biosynthesis; N(2)-acetyl-L-ornithine from L-glutamate: step 4/4. This chain is Acetylornithine aminotransferase, found in Vibrio vulnificus (strain YJ016).